Here is a 201-residue protein sequence, read N- to C-terminus: Dephospho-CoA kinase (201 aa).

In terms of domain architecture, DPCK spans 4–201 (SVGLTGNIAS…KYLREAKIKQ (198 aa)). Residue 12-17 (ASGKST) participates in ATP binding.

Belongs to the CoaE family.

The protein localises to the cytoplasm. The enzyme catalyses 3'-dephospho-CoA + ATP = ADP + CoA + H(+). It participates in cofactor biosynthesis; coenzyme A biosynthesis; CoA from (R)-pantothenate: step 5/5. Its function is as follows. Catalyzes the phosphorylation of the 3'-hydroxyl group of dephosphocoenzyme A to form coenzyme A. In Legionella pneumophila (strain Lens), this protein is Dephospho-CoA kinase.